The chain runs to 469 residues: Mitochondrial adenyl nucleotide antiporter SLC25A25 (469 aa).

The segment at 1–165 is regulatory N-terminal domain; the sequence is MLCLCLYVPV…LYWKHSTIFD (165 aa). The Mitochondrial intermembrane portion of the chain corresponds to 1–189; that stretch reads MLCLCLYVPV…ERQTGMWWRH (189 aa). 3 EF-hand domains span residues 47–80, 78–113, and 114–149; these read TYRQWKQKIVQAGDKDLDGQLDFEEFVHYLQDHE, DHEKKLRLVFKSLDKKNDGRIDAQEIMQSLRDLGVK, and ISEQQAEKILKSMDKNGTMTIDWNEWRDYHLLHPVE. Residues Asp60, Asp62, Asp64, Gln66, and Glu71 each contribute to the Ca(2+) site. Positions 151 to 160 are linker region; sequence IPEIILYWKH. Positions 166–469 are C-terminal transmembrane transporter domain; it reads VGENLTVPDE…LKITLGVQSR (304 aa). Solcar repeat units follow at residues 184-270, 278-363, and 375-463; these read GMWW…IKRL, LRIH…LKNA, and PGVF…LKIT. The helical transmembrane segment at 190–207 threads the bilayer; the sequence is LVAGGGAGAVSRTCTAPL. Topologically, residues 208-244 are mitochondrial matrix; that stretch reads DRLKVLMQVHASRSNNMGIVGGFTQMIREGGARSLWR. Residues 245–264 traverse the membrane as a helical segment; sequence GNGINVLKIAPESAIKFMAY. Residues 265 to 287 are Mitochondrial intermembrane-facing; the sequence is EQIKRLVGSDQETLRIHERLVAG. Residues 288–301 form a helical membrane-spanning segment; the sequence is SLAGAIAQSSIYPM. Residues 302–337 are Mitochondrial matrix-facing; it reads EVLKTRMALRKTGQYSGMLDCARRILAREGVAAFYK. A helical membrane pass occupies residues 338 to 357; it reads GYVPNMLGIIPYAGIDLAVY. Over 358–380 the chain is Mitochondrial intermembrane; that stretch reads ETLKNAWLQHYAVNSADPGVFVL. The helical transmembrane segment at 381-398 threads the bilayer; the sequence is LACGTMSSTCGQLASYPL. The Mitochondrial matrix segment spans residues 399 to 437; it reads ALVRTRMQAQASIEGAPEVTMSSLFKHILRTEGAFGLYR. A helical transmembrane segment spans residues 438–457; it reads GLAPNFMKVIPAVSISYVVY. The Mitochondrial intermembrane segment spans residues 458–469; the sequence is ENLKITLGVQSR.

It belongs to the mitochondrial carrier (TC 2.A.29) family. In terms of tissue distribution, widely expressed. Expressed in fetal and adult liver, skeletal muscle, testis, ovary, hippocampus and caudate nucleus. Expressed in all tissues tested. As to expression, expression is restricted to kidney and lung.

The protein resides in the mitochondrion inner membrane. The catalysed reaction is Mg(2+)(out) + phosphate(in) + ATP(out) = Mg(2+)(in) + phosphate(out) + ATP(in). Activated by an increase in cytosolic calcium levels that induce a conformational change of the N-terminal regulatory domain, uncapping the channel and allowing transport. Functionally, electroneutral antiporter that most probably mediates the transport of adenyl nucleotides through the inner mitochondrial membrane. Originally identified as an ATP-magnesium/inorganic phosphate antiporter, it could have a broader specificity for adenyl nucleotides. By regulating the mitochondrial matrix adenyl nucleotide pool could adapt to changing cellular energetic demands and indirectly regulate adenyl nucleotide-dependent metabolic pathways. This chain is Mitochondrial adenyl nucleotide antiporter SLC25A25, found in Homo sapiens (Human).